The primary structure comprises 577 residues: Cell adhesion molecule CEACAM20 (577 aa).

The first 30 residues, 1 to 30, serve as a signal peptide directing secretion; that stretch reads MELAGFHCCSWTVILLSALLPTTWRPPAAA. At 31-430 the chain is on the extracellular side; the sequence is HFIHRADLLS…LQSSSMSPGA (400 aa). 4 Ig-like C2-type domains span residues 48-137, 142-223, 239-324, and 329-415; these read PLAK…ASLT, PDPV…TNLS, PNIE…LKLT, and PDQV…ASVL. Cysteine 72 and cysteine 120 are oxidised to a cystine. 2 N-linked (GlcNAc...) asparagine glycosylation sites follow: asparagine 78 and asparagine 102. Intrachain disulfides connect cysteine 259–cysteine 307 and cysteine 358–cysteine 399. Asparagine 289 carries an N-linked (GlcNAc...) asparagine glycan. The chain crosses the membrane as a helical span at residues 431–451; it reads IAGIVIGILVAIALAIGLGYF. The Cytoplasmic portion of the chain corresponds to 452–577; the sequence is LYSTKDRWTR…SLYCKITPSA (126 aa). Positions 461 to 568 are disordered; it reads RRRSASDTTS…YEKLLNSNHS (108 aa). The segment covering 474 to 484 has biased composition (polar residues); sequence IPPTSVMQSTP. The span at 516 to 526 shows a compositional bias: basic and acidic residues; that stretch reads DSPEQFYEKKP. Over residues 536–551 the composition is skewed to pro residues; that stretch reads KPLPQIPKQPLMPPGP. Tyrosine 559 and tyrosine 570 each carry phosphotyrosine.

It belongs to the immunoglobulin superfamily. CEA family. In terms of assembly, interacts (via extracellular domain) with PTPRH (via extracellular domain); the interaction dephosphorylates CEACAM20. Interacts (phosphorylated form) with SYK (via SH2 domains); the interaction further enhances CEACAM20 phosphorylation. In terms of processing, phosphorylated on tyrosine residues by SYK, SRC and FYN in vitro. Strongly expressed in the small intestine and colon (at protein level). Minimal expression in other tissues (at protein level). Highly expressed in cecum, colon, ileum, jejunum, and testis, and also detected at lower levels in salivary gland and thymus.

Its subcellular location is the cell projection. It localises to the microvillus membrane. It is found in the apical cell membrane. In terms of biological role, together with the tyrosine-protein kinase SYK, enhances production of the cytokine CXCL8/IL-8 via the NFKB pathway and may thus have a role in the intestinal immune response. The sequence is that of Cell adhesion molecule CEACAM20 from Mus musculus (Mouse).